A 558-amino-acid polypeptide reads, in one-letter code: Arginine--tRNA ligase (558 aa).

The 'HIGH' region signature appears at 134-144 (ANPTGPMVLVQ).

The protein belongs to the class-I aminoacyl-tRNA synthetase family. As to quaternary structure, monomer.

The protein localises to the cytoplasm. The catalysed reaction is tRNA(Arg) + L-arginine + ATP = L-arginyl-tRNA(Arg) + AMP + diphosphate. This chain is Arginine--tRNA ligase, found in Symbiobacterium thermophilum (strain DSM 24528 / JCM 14929 / IAM 14863 / T).